We begin with the raw amino-acid sequence, 345 residues long: DNA N(6)-methyladenine demethylase ALKBH1A (345 aa).

Substrate-binding positions include W179 and 186–188; that span reads FDW. The Fe2OG dioxygenase domain maps to 225-345; the sequence is RPEGAIVNYF…RININIRQVF (121 aa). 232–234 is a binding site for 2-oxoglutarate; it reads NYF. Fe cation contacts are provided by H243, D245, and H299. Position 336 to 342 (336 to 342) interacts with 2-oxoglutarate; the sequence is RININIR.

This sequence belongs to the alkB family. Fe(2+) is required as a cofactor. In terms of tissue distribution, mostly expressed in siliques, to a lower extent in roots, seedlings and rosette leaves, but barely in cauline leaves, stems and flowers.

The protein resides in the nucleus. The protein localises to the cytoplasm. The catalysed reaction is an N(6)-methyl-2'-deoxyadenosine in DNA + 2-oxoglutarate + O2 = a 2'-deoxyadenosine in DNA + formaldehyde + succinate + CO2. Its function is as follows. Dioxygenase that catalyzes DNA N(6)-methyladenine (6 mA) demethylation to modulate gene expression and regulate seed germination. The sequence is that of DNA N(6)-methyladenine demethylase ALKBH1A from Arabidopsis thaliana (Mouse-ear cress).